Here is a 153-residue protein sequence, read N- to C-terminus: Cytochrome c-type biogenesis protein CcmE (153 aa).

At 1 to 6 the chain is on the cytoplasmic side; the sequence is MNARRR. The helical; Signal-anchor for type II membrane protein transmembrane segment at 7-27 threads the bilayer; that stretch reads LWSVLMLILAVGTAATLTIMA. Residues 28 to 153 are Periplasmic-facing; the sequence is LRHNLTYLYM…LDTPIAETTP (126 aa). 2 residues coordinate heme: histidine 121 and tyrosine 125. Residues 131 to 141 are compositionally biased toward polar residues; that stretch reads ANKMQPTPTQH. Residues 131–153 are disordered; that stretch reads ANKMQPTPTQHTHLDTPIAETTP.

This sequence belongs to the CcmE/CycJ family.

The protein localises to the cell inner membrane. Functionally, heme chaperone required for the biogenesis of c-type cytochromes. Transiently binds heme delivered by CcmC and transfers the heme to apo-cytochromes in a process facilitated by CcmF and CcmH. The polypeptide is Cytochrome c-type biogenesis protein CcmE (Xylella fastidiosa (strain Temecula1 / ATCC 700964)).